A 339-amino-acid polypeptide reads, in one-letter code: Glycerol-3-phosphate dehydrogenase [NAD(P)+] (339 aa).

NADPH is bound by residues serine 15, tyrosine 16, histidine 36, and lysine 110. Residues lysine 110, glycine 139, and threonine 141 each contribute to the sn-glycerol 3-phosphate site. Alanine 143 serves as a coordination point for NADPH. 5 residues coordinate sn-glycerol 3-phosphate: lysine 195, aspartate 248, serine 258, arginine 259, and asparagine 260. Lysine 195 (proton acceptor) is an active-site residue. Arginine 259 contributes to the NADPH binding site. Residues valine 283 and glutamate 285 each coordinate NADPH.

This sequence belongs to the NAD-dependent glycerol-3-phosphate dehydrogenase family.

It is found in the cytoplasm. It carries out the reaction sn-glycerol 3-phosphate + NAD(+) = dihydroxyacetone phosphate + NADH + H(+). The enzyme catalyses sn-glycerol 3-phosphate + NADP(+) = dihydroxyacetone phosphate + NADPH + H(+). The protein operates within membrane lipid metabolism; glycerophospholipid metabolism. Catalyzes the reduction of the glycolytic intermediate dihydroxyacetone phosphate (DHAP) to sn-glycerol 3-phosphate (G3P), the key precursor for phospholipid synthesis. The sequence is that of Glycerol-3-phosphate dehydrogenase [NAD(P)+] from Escherichia fergusonii (strain ATCC 35469 / DSM 13698 / CCUG 18766 / IAM 14443 / JCM 21226 / LMG 7866 / NBRC 102419 / NCTC 12128 / CDC 0568-73).